The following is a 476-amino-acid chain: mRNA cap guanine-N(7) methyltransferase (476 aa).

Residues 1–14 are compositionally biased toward basic and acidic residues; that stretch reads MANSAKAEEYEKMS. The tract at residues 1-146 is disordered; it reads MANSAKAEEY…KQKNLEEGHS (146 aa). Residues 20–50 are compositionally biased toward polar residues; the sequence is ASVNSETESSFNINENTTASGTGLSEKTSVC. A phosphoserine mark is found at S24, S28, and S29. Basic and acidic residues-rich tracts occupy residues 54–68 and 84–118; these read DIAR…DLVK and LDPE…DKSS. Phosphoserine is present on S118. A Nuclear localization signal motif is present at residues 126-128; sequence KRK. Basic and acidic residues predominate over residues 129-145; the sequence is IALEDVPEKQKNLEEGH. The 309-residue stretch at 167–475 folds into the mRNA cap 0 methyltransferase domain; the sequence is SRIFYLRNFN…IYLVFAFEKQ (309 aa). 176-177 provides a ligand contact to mRNA; that stretch reads NN. S-adenosyl-L-methionine contacts are provided by K180, G205, D227, D261, Q284, and Y289.

This sequence belongs to the class I-like SAM-binding methyltransferase superfamily. mRNA cap 0 methyltransferase family. In terms of assembly, interacts with importin alpha, leading to stimulate both RNA-binding and methyltransferase activity. Interaction with importin alpha and beta is required for its nuclear localization, importin beta dissociating in response to RanGTP, allowing RNMT-importin alpha to bind RNA substrates. Interacts with elongating form of polymerase II and RNGTT. Interacts with RAMAC, this interaction significantly enhances RNA-binding and cap methyltransferase activity. In terms of tissue distribution, widely expressed.

It is found in the nucleus. It catalyses the reaction a 5'-end (5'-triphosphoguanosine)-ribonucleoside in mRNA + S-adenosyl-L-methionine = a 5'-end (N(7)-methyl 5'-triphosphoguanosine)-ribonucleoside in mRNA + S-adenosyl-L-homocysteine. Its activity is regulated as follows. Methyltransferase activity is activated by RAMAC. Its function is as follows. Catalytic subunit of the mRNA-capping methyltransferase RNMT:RAMAC complex that methylates the N7 position of the added guanosine to the 5'-cap structure of mRNAs. Binds RNA containing 5'-terminal GpppC. This chain is mRNA cap guanine-N(7) methyltransferase (RNMT), found in Homo sapiens (Human).